A 299-amino-acid polypeptide reads, in one-letter code: tRNA dimethylallyltransferase (299 aa).

Residue 11–18 (GPTAVGKT) coordinates ATP. 13-18 (TAVGKT) is a binding site for substrate. The segment at 36–39 (DSQQ) is interaction with substrate tRNA.

It belongs to the IPP transferase family. In terms of assembly, monomer. Mg(2+) serves as cofactor.

It carries out the reaction adenosine(37) in tRNA + dimethylallyl diphosphate = N(6)-dimethylallyladenosine(37) in tRNA + diphosphate. Its function is as follows. Catalyzes the transfer of a dimethylallyl group onto the adenine at position 37 in tRNAs that read codons beginning with uridine, leading to the formation of N6-(dimethylallyl)adenosine (i(6)A). The sequence is that of tRNA dimethylallyltransferase from Streptococcus pyogenes serotype M12 (strain MGAS2096).